A 286-amino-acid polypeptide reads, in one-letter code: tRNA (guanine-N(7)-)-methyltransferase (286 aa).

Residues G91, 114 to 115 (EI), 158 to 159 (NS), and L178 each bind S-adenosyl-L-methionine. The active site involves D181. An S-adenosyl-L-methionine-binding site is contributed by 256–258 (TEE).

The protein belongs to the class I-like SAM-binding methyltransferase superfamily. TrmB family. In terms of assembly, forms a complex with TRM82.

It is found in the nucleus. It catalyses the reaction guanosine(46) in tRNA + S-adenosyl-L-methionine = N(7)-methylguanosine(46) in tRNA + S-adenosyl-L-homocysteine. It participates in tRNA modification; N(7)-methylguanine-tRNA biosynthesis. Catalyzes the formation of N(7)-methylguanine at position 46 (m7G46) in tRNA. This is tRNA (guanine-N(7)-)-methyltransferase from Cryptococcus neoformans var. neoformans serotype D (strain B-3501A) (Filobasidiella neoformans).